The following is a 330-amino-acid chain: Putative [LysW]-L-2-aminoadipate/[LysW]-L-glutamate phosphate reductase (330 aa).

NADP(+) is bound by residues 10–13 (SGYI) and 34–36 (SRK). The active site involves Cys142. Residue Asn297 coordinates NADP(+).

This sequence belongs to the NAGSA dehydrogenase family. Type 1 subfamily. LysY sub-subfamily.

It localises to the cytoplasm. It catalyses the reaction [amino-group carrier protein]-C-terminal-N-(1-carboxy-5-oxopentan-1-yl)-L-glutamine + phosphate + NADP(+) = [amino-group carrier protein]-C-terminal-N-(1-carboxy-5-phosphooxy-5-oxopentan-1-yl)-L-glutamine + NADPH + H(+). The enzyme catalyses [amino-group carrier protein]-C-terminal-gamma-(L-glutamyl-5-semialdehyde)-L-glutamate + phosphate + NADP(+) = [amino-group carrier protein]-C-terminal-gamma-(5-phospho-L-glutamyl)-L-glutamate + NADPH + H(+). The protein operates within amino-acid biosynthesis; L-lysine biosynthesis via AAA pathway; L-lysine from L-alpha-aminoadipate (Thermus route): step 3/5. It participates in amino-acid biosynthesis; L-arginine biosynthesis. Its function is as follows. Involved in both the arginine and lysine biosynthetic pathways. In Pyrococcus abyssi (strain GE5 / Orsay), this protein is Putative [LysW]-L-2-aminoadipate/[LysW]-L-glutamate phosphate reductase.